The primary structure comprises 880 residues: Leucine--tRNA ligase (880 aa).

The short motif at 46 to 56 (PYPSGALHMGH) is the 'HIGH' region element. The short motif at 638–642 (KMSKS) is the 'KMSKS' region element. Position 641 (lysine 641) interacts with ATP.

The protein belongs to the class-I aminoacyl-tRNA synthetase family.

Its subcellular location is the cytoplasm. It carries out the reaction tRNA(Leu) + L-leucine + ATP = L-leucyl-tRNA(Leu) + AMP + diphosphate. The protein is Leucine--tRNA ligase of Stenotrophomonas maltophilia (strain R551-3).